The primary structure comprises 68 residues: Large ribosomal subunit protein uL29 (68 aa).

The protein belongs to the universal ribosomal protein uL29 family.

In Rhodospirillum rubrum (strain ATCC 11170 / ATH 1.1.1 / DSM 467 / LMG 4362 / NCIMB 8255 / S1), this protein is Large ribosomal subunit protein uL29.